The chain runs to 34 residues: Photosystem II reaction center protein Psb30 (34 aa).

A helical membrane pass occupies residues 6-26 (VIGQLLSATLIVLAGPAVIFV).

It belongs to the Psb30/Ycf12 family. In terms of assembly, PSII is composed of 1 copy each of membrane proteins PsbA, PsbB, PsbC, PsbD, PsbE, PsbF, PsbH, PsbI, PsbJ, PsbK, PsbL, PsbM, PsbT, PsbX, PsbY, PsbZ, Psb30/Ycf12, peripheral proteins of the oxygen-evolving complex and a large number of cofactors. It forms dimeric complexes.

It localises to the plastid. The protein resides in the chloroplast thylakoid membrane. Functionally, a core subunit of photosystem II (PSII), probably helps stabilize the reaction center. This chain is Photosystem II reaction center protein Psb30, found in Heterosigma akashiwo (strain NIES-293 / 8280G21-1).